The chain runs to 372 residues: Alanine dehydrogenase 1 (372 aa).

Residue His-94 is part of the active site. 170–200 is a binding site for NAD(+); the sequence is TYVIFGGGVAATNAANVALGLNAKVIIIELN.

It belongs to the AlaDH/PNT family.

The enzyme catalyses L-alanine + NAD(+) + H2O = pyruvate + NH4(+) + NADH + H(+). It functions in the pathway amino-acid degradation; L-alanine degradation via dehydrogenase pathway; NH(3) and pyruvate from L-alanine: step 1/1. Functionally, may play a role in cell wall synthesis as L-alanine is an important constituent of the peptidoglycan layer. The chain is Alanine dehydrogenase 1 (ald1) from Staphylococcus aureus (strain USA300).